The following is a 2492-amino-acid chain: MSISLKINIVGANTVKTLRFAPDMCIQECCTHIFEKTNEGGPDHGLYQAHIEGKQSARWLAMEKTLQFYDINSDQQLDYKKKHRPQKFKLLDGTIKTQLVDESQNVSEIVNSICKKMGIKNPEEYSLMNSAGAWLNNTQILSEQGISENDITVLMKKFFFNDANIDRNDPVQLHLLFVQCRDGIIEGKYPTQREESLALSALQCQVQLGDYNPTKHEPGFLTLKDYLPLQWLKSKGVEKDIFKEHKKLVSMTEVNAKYRYVQLCRSLKTYGMTSFDVKIREYGKKKMVDHILGITREQMLLMLTETKEVIMTHPLKHIKRWAATDKSFTLDFGDHETEYLILQTPNPEQISQLIGGYIEIIMKARKDSSKVIEKEDTAMGVEEVMAVKKGSVANSSSYMGYGAGGGGANQLQPSQQIPITDLKSALRATDLLIGELGGFRSSTGATPQNFTRSFTTLTPQQFKHQLISHTNAMAIAAQGLFQDMTTPPPTGGIAAFQQAITKRAQIIMAELNTVGTAAKNAGYFPDMASFSDEIIGVATKLSESMARLLAIGSTIQGTDCDEKSQKAAQTEIFNVQSLVTLMMAACDNEYVTDSSSKLLIECAKNVSAAIADMLVVGNSKVEFIDDELLLGQIQNTLKSTSLTSDELLSTTENLASTSCHPESRKQITNITQSALNQSNALLTAFKSGEIPEQDYNLLNARVSDIIESVNLINYAMDCSEREYKISITSNGVEVGEGEILAGTNLTEEFATVANDLTNAIMTMRSNLKNPDTVMESYKMVAGHANRLITCTKAVASRADTQSQQRLFNSTNAVFESVANLSNHCRSYIKNPEQEAHTFQIVETAGHLQFLTQNMSTDAGKIACITSLRDYSKEMIAQVSSLISTSRTSSQYLPDANGITLLKGAKDVSDALSKLMVGIKKVVLDPKSEATQMELLTLAQKQSLPPMNLVSTCKRFAPKISDPNQKQRLIFSSDAAAQSVQKLMKAGEAYKRICGHIEIEEALEVFDSTIADLETTEIAIAGGFLDAVSGTTREGAAELLMVAIKDLNKVNNELVTDIRVNPARLGDLVKSATESASSVAISAKTLICATTGKQVQTKLMGITKQLMIDMEQLIRASRSVRSNPNDRRSELLLDRRSNDVSISTAALVGSTANVDCKELDEASADISNLLSLKMGSLESILSQPTEEFAFYVEEIASSTKALNAASQQVVAMARNKNLKGLGASAKITASALSTLVSHAQNAIVLTENEATKNAILASTVALGGQIIGLLDFSKARIANYKDPIYDQNLINQAKSVEDHLVKVGRSLGGDGNNTICDEAVDRIIEATRSLDKTILPDTSGLQTNAHLEMLHQQSLLAITQASKKLGSITSNLVNSKNNSDLVGSGSTDAERIIEMIEAAKHVVHCSISTYNPDILLPAKSILDASQMLTANQADVNHVLSHAATIAACTQQLLGITRERASQFNEQDEQQVQVRDGIVKSTQQLAHATSSLARAVKSVTSKEPGAKAMISQSLKDLESAINNLLITSSVPASERGIGIADFNKLMSTCRSVSTASSQLIISASSCSQKPKDIELSSILSENAVLMTNSLKDIIKVTSSMMPGVNFCEEAIEIAQRAISDLSSVALSVAVGSFDSSANNKEGLSHVESQERLVDVTKKIGTGINDLLKASRQSPEAIGISAKALSFIAPSLVNTTKPALATAPDADAQNDLVTESKNVGDSILKLCQASLIASSNPSKETYQIIVNKCVDASEAMSKLVAQISSGVNLYKELDESLDRIRKSVVQTSAKDAPKDSENRGYQEYKEELSNLTKNLALSLKTIVATDGNNLVSISTISKDIANYISDIAHVSSAILATTSDQKIRDSIITSSRQVIVSTGDIVNHIKVNSTDKANSSQAKVNDSYRATNDNITRFLQSLKQGAIGEILSDAAIDQIRKVISDLDGYSLFAAAGQLENDQSSQSTMNEVTKQQHLKNLQKDTITQAKLLIVSSSQLVGSSRGTQEHLGSATTKVANTVSSLVKTAKDIASVLADTTSQQDILSASKALSISSQQMVLATKDAQRFKKDATAFRSLGKSAEAVAEAVGQFLTSVYTAISDAGKGIKELEKSIVQVANYHEKPDTVLSNKDATAEIFAQSARDLAKSSIEIVTSYTSSQDSLVKSSQAVVSNVQSFISNSKGVIALLGNGNDDLKSKVLENVKQTTGDMLALLQCVKDQDKNGSTSIADATRSISDRVHSVVTLSKSLPGGQNIVVEEDNVLEDLEALAEDELSACARSIEEATAKLIAARPQSKSKNGKLDAEGVAATIVDASSAIAKAVAKLVNSAAVAQSKRREDQIASGSVYKADPTWSNGLISAAKGVGAATHRLVEAAMKSATGKAEEEELIATARSVAAATALLVSASRAKSGDDYQSQAAHSHLSTAARQVASATSDLVAAAKAATIFDEQQQEEEQEQFNFTGSKVKELEQQMKILKLEKELETARRQMLNSRKQNYNKN.

Residues 84–365 (RPQKFKLLDG…GYIEIIMKAR (282 aa)) enclose the FERM domain. The I/LWEQ domain occupies 2250-2492 (EEDNVLEDLE…NSRKQNYNKN (243 aa)).

It is found in the cytoplasm. The protein resides in the cytoskeleton. The protein localises to the cell cortex. Functionally, actin-binding protein that may be involved in the control of cell motility and chemotaxis. The polypeptide is Talin-A (talA) (Dictyostelium discoideum (Social amoeba)).